The following is a 260-amino-acid chain: Large ribosomal subunit protein uL2 (260 aa).

Positions 208 to 230 (EHPHGGGNHQHIGHPSTVRRDAS) are disordered.

The protein belongs to the universal ribosomal protein uL2 family.

The protein localises to the cytoplasm. The protein is Large ribosomal subunit protein uL2 of Caenorhabditis elegans.